Here is a 619-residue protein sequence, read N- to C-terminus: DNA mismatch repair protein MutL (619 aa).

Belongs to the DNA mismatch repair MutL/HexB family.

This protein is involved in the repair of mismatches in DNA. It is required for dam-dependent methyl-directed DNA mismatch repair. May act as a 'molecular matchmaker', a protein that promotes the formation of a stable complex between two or more DNA-binding proteins in an ATP-dependent manner without itself being part of a final effector complex. In Xylella fastidiosa (strain M23), this protein is DNA mismatch repair protein MutL.